A 304-amino-acid chain; its full sequence is 4-diphosphocytidyl-2-C-methyl-D-erythritol kinase (304 aa).

Residue K23 is part of the active site. Residue P111 to S121 participates in ATP binding. D153 is a catalytic residue.

It belongs to the GHMP kinase family. IspE subfamily. In terms of assembly, homodimer.

It catalyses the reaction 4-CDP-2-C-methyl-D-erythritol + ATP = 4-CDP-2-C-methyl-D-erythritol 2-phosphate + ADP + H(+). It participates in isoprenoid biosynthesis; isopentenyl diphosphate biosynthesis via DXP pathway; isopentenyl diphosphate from 1-deoxy-D-xylulose 5-phosphate: step 3/6. Catalyzes the phosphorylation of the position 2 hydroxy group of 4-diphosphocytidyl-2C-methyl-D-erythritol. This is 4-diphosphocytidyl-2-C-methyl-D-erythritol kinase from Wigglesworthia glossinidia brevipalpis.